We begin with the raw amino-acid sequence, 78 residues long: Large ribosomal subunit protein bL28 (78 aa).

The protein belongs to the bacterial ribosomal protein bL28 family.

In Escherichia coli O139:H28 (strain E24377A / ETEC), this protein is Large ribosomal subunit protein bL28.